We begin with the raw amino-acid sequence, 445 residues long: CBL-interacting serine/threonine-protein kinase 8 (445 aa).

The Protein kinase domain occupies 9–262 (YELGRTIGEG…IAEIRKDEWF (254 aa)). ATP-binding positions include 15–23 (IGEGTFAKV) and Lys38. Asp132 functions as the Proton acceptor in the catalytic mechanism. The segment at 150–177 (DFGLSALPEQGVTILKTTCGTPNYVAPE) is activation loop. The residue at position 154 (Ser154) is a Phosphoserine. At Thr166 the chain carries Phosphothreonine. The region spanning 302–326 (TGPLTLNAFDLIILSQGLNLATLFD) is the NAF domain. Positions 333–362 (KHQTRFISHKPANVVLSSMEVVSQSMGFKT) are PPI.

This sequence belongs to the protein kinase superfamily. CAMK Ser/Thr protein kinase family. SNF1 subfamily. Interacts with CBL1 and CBL9. Requires Mn(2+) as cofactor. In terms of tissue distribution, mostly expressed in roots, and, to a lower extent, in leaves, stems, flowers, and siliques.

The enzyme catalyses L-seryl-[protein] + ATP = O-phospho-L-seryl-[protein] + ADP + H(+). It catalyses the reaction L-threonyl-[protein] + ATP = O-phospho-L-threonyl-[protein] + ADP + H(+). Functionally, CIPK serine-threonine protein kinases interact with CBL proteins. Binding of a CBL protein to the regulatory NAF domain of CIPK protein lead to the activation of the kinase in a calcium-dependent manner. The polypeptide is CBL-interacting serine/threonine-protein kinase 8 (CIPK8) (Arabidopsis thaliana (Mouse-ear cress)).